The chain runs to 883 residues: Valine--tRNA ligase (883 aa).

Positions 46-56 (PNVTGKLHLGH) match the 'HIGH' region motif. The 'KMSKS' region motif lies at 520–524 (KMSKS). Residue Lys-523 coordinates ATP. A coiled-coil region spans residues 809-883 (LADLLNVEEE…RIDEMKKLVK (75 aa)).

Belongs to the class-I aminoacyl-tRNA synthetase family. ValS type 1 subfamily. Monomer.

The protein resides in the cytoplasm. It carries out the reaction tRNA(Val) + L-valine + ATP = L-valyl-tRNA(Val) + AMP + diphosphate. Its function is as follows. Catalyzes the attachment of valine to tRNA(Val). As ValRS can inadvertently accommodate and process structurally similar amino acids such as threonine, to avoid such errors, it has a 'posttransfer' editing activity that hydrolyzes mischarged Thr-tRNA(Val) in a tRNA-dependent manner. The sequence is that of Valine--tRNA ligase from Streptococcus pneumoniae serotype 4 (strain ATCC BAA-334 / TIGR4).